The chain runs to 846 residues: Interleukin cytokine receptor-related protein 1 (846 aa).

The N-terminal stretch at 1-25 (MFLHSPALLIWLFLFCLAGPQAVRT) is a signal peptide. Over 26 to 418 (EPYNSTSSSS…KEDTTWTWHT (393 aa)) the chain is Extracellular. Asparagine 29, asparagine 79, asparagine 186, asparagine 214, asparagine 339, and asparagine 395 each carry an N-linked (GlcNAc...) asparagine glycan. Residues 388–409 (EKPPATSNQTEESDGKAEKDKK) are disordered. A compositionally biased stretch (basic and acidic residues) spans 400–409 (SDGKAEKDKK). A helical membrane pass occupies residues 419-439 (YAITGGAIIAILFILSVCAGL). The Cytoplasmic segment spans residues 440 to 846 (KCYKKFNNKK…AFHDEVIGIH (407 aa)). An SEFIR domain is found at 476-618 (SISVLIVYSH…IPNSLMTMTT (143 aa)). Positions 737–771 (GPIHVEPTEPEVLEPAEEPMEEAEEDEEDEDDVDS) are disordered. Residues 744-771 (TEPEVLEPAEEPMEEAEEDEEDEDDVDS) are compositionally biased toward acidic residues.

As to quaternary structure, component of a heterodimeric receptor complex composed of ilcr-1 and ilcr-2. The receptor complex interacts with actl-1 and ilc-17.1 with the interaction being mediated by ilcr-2. In terms of tissue distribution, expressed in most neurons.

It localises to the cell membrane. Forms a receptor complex together with receptor ilcr-2, which upon activation acts as a modulator of neuronal activity. Binding of the ligand ilc-17.1 to the ilcr-1/2 receptor complex triggers a signaling cascade that activates the downstream signaling components actl-1, pik-1 and nfki-1, and results in increased neuronal activity in RMG interneurons in response to input from oxygen-sensing neurons. This leads to increased animal movement and promotes aggregation behavior. The polypeptide is Interleukin cytokine receptor-related protein 1 (Caenorhabditis elegans).